Reading from the N-terminus, the 492-residue chain is Aerolysin (492 aa).

An N-terminal signal peptide occupies residues 1–21 (MKALKITGLSLIISATLAAQT). 2 cysteine pairs are disulfide-bonded: C42–C98 and C182–C187. The interval 68–84 (WQISGLANNWVILGPGY) is interaction with host N-linked glycan. A part of the transmembrane beta-barrel after proteolytic activation of the toxin and insertion into the host membrane region spans residues 256 to 288 (YGLSEKVSTKNKFKWPLVGETEVSIEIAANQSW). The segment at 346 to 355 (RWGGNAWHTH) is interaction with glycans from host GPI-anchor. The propeptide occupies 446–492 (GSDSKVRRTRSVDGANTGLKLDIPLDAQELAELGFENVTLSVTPARN).

Belongs to the aerolysin family. In terms of assembly, homodimer in solution; homoheptamer in the host membrane. After binding to GPI-anchored proteins in target membranes and proteolytic removal of the C-terminal propeptide, the protein assembles into a heptameric pre-pore complex. A further conformation change leads to insertion into the host membrane. Proteolytic cleavage and subsequent release of the propeptide trigger a major conformation change, leading to the formation of a heptameric pre-pore that then inserts into the host membrane.

Its subcellular location is the secreted. It is found in the host cell membrane. Its function is as follows. Secreted, cytolytic toxin that forms pores in host membranes after proteolytic removal of a C-terminal propeptide, leading to destruction of the membrane permeability barrier and cell death. The pores are formed by transmembrane beta-strands and are approximately 3 nm in diameter. The chain is Aerolysin (aerA) from Aeromonas enteropelogenes (Aeromonas trota).